A 286-amino-acid polypeptide reads, in one-letter code: Aquaporin PIP1-1 (286 aa).

Position 1 is an N-acetylmethionine (methionine 1). Positions methionine 1 to proline 34 are disordered. At methionine 1–glycine 54 the chain is on the cytoplasmic side. Residues isoleucine 55–valine 75 form a helical membrane-spanning segment. At lysine 76 to alanine 91 the chain is on the extracellular side. Residues tryptophan 92–histidine 112 form a helical membrane-spanning segment. At isoleucine 113–alanine 132 the chain is on the cytoplasmic side. The short motif at asparagine 114–alanine 116 is the NPA 1 element. A helical transmembrane segment spans residues leucine 133–phenylalanine 153. At glutamine 154–lysine 174 the chain is on the extracellular side. A helical transmembrane segment spans residues glycine 175–alanine 195. The Cytoplasmic portion of the chain corresponds to threonine 196–proline 208. A helical transmembrane segment spans residues isoleucine 209 to isoleucine 229. The Extracellular segment spans residues threonine 230–tryptophan 256. An NPA 2 motif is present at residues asparagine 235–alanine 237. The helical transmembrane segment at valine 257 to isoleucine 277 threads the bilayer. The Cytoplasmic segment spans residues arginine 278–serine 286. Serine 284 bears the Phosphoserine mark.

The protein belongs to the MIP/aquaporin (TC 1.A.8) family. PIP (TC 1.A.8.11) subfamily. In terms of tissue distribution, widely expressed. Expressed in roots, above ground and in flower buds.

The protein resides in the cell membrane. Functionally, water channel required to facilitate the transport of water across cell membrane. Its function is impaired by Hg(2+). The sequence is that of Aquaporin PIP1-1 (PIP1-1) from Arabidopsis thaliana (Mouse-ear cress).